Here is a 457-residue protein sequence, read N- to C-terminus: Putative hexose transporter 12 (457 aa).

The Cytoplasmic portion of the chain corresponds to 1–2; that stretch reads MG. The chain crosses the membrane as a helical span at residues 3–23; sequence LIVSIFNIGCAIGGIVLSKVG. Over 24 to 29 the chain is Extracellular; sequence DIYGRR. The chain crosses the membrane as a helical span at residues 30–50; the sequence is IGLITVTAIYVVGILIQITSI. At 51–60 the chain is on the cytoplasmic side; the sequence is NKWYQYFIGR. A helical transmembrane segment spans residues 61-81; it reads IISGIGVGGIAVLSPMLISEV. The Extracellular portion of the chain corresponds to 82 to 87; it reads APKHIR. The chain crosses the membrane as a helical span at residues 88-108; sequence GTLVQLYQLMGTMGIFLGYCT. Residues 109–122 lie on the Cytoplasmic side of the membrane; it reads NYGTKNYHNATQWR. The chain crosses the membrane as a helical span at residues 123 to 143; sequence VGLGLCFAWATFMVSGMMFVP. Topologically, residues 144 to 247 are extracellular; sequence ESPRYLIEVG…KSVGLKDSFQ (104 aa). Residue Asn194 is glycosylated (N-linked (GlcNAc...) asparagine). Residues 248–268 traverse the membrane as a helical segment; the sequence is TSIIIGVVNFFSSFIAVYTIE. Topologically, residues 269 to 274 are cytoplasmic; that stretch reads RFGRRT. The helical transmembrane segment at 275–295 threads the bilayer; it reads CLLWGAASMLCCFAVFASVGV. At 296-319 the chain is on the extracellular side; that stretch reads TKLWPQGSSHQDITSQGAGNCMIV. Residues 320-340 form a helical membrane-spanning segment; the sequence is FTMFFIFSFATTWAGGCFVIV. Over 341–353 the chain is Cytoplasmic; it reads SETFPLRAKSRGM. The chain crosses the membrane as a helical span at residues 354-374; sequence AIATAANWMWGFLISFFTPFI. Over 375–379 the chain is Extracellular; sequence TGAIN. Residues 380-400 traverse the membrane as a helical segment; sequence FYYGYVFLGCLVFAYFYVFFF. At 401 to 457 the chain is on the cytoplasmic side; sequence VPETKGLTLEEVNTMWLEGVPAWKSASWVPPERRTADYDADAIDHDNRPIYKRFFSS.

Belongs to the major facilitator superfamily. Sugar transporter (TC 2.A.1.1) family.

Its subcellular location is the membrane. In terms of biological role, probable glucose transporter. The sequence is that of Putative hexose transporter 12 (HXT12) from Saccharomyces cerevisiae (strain ATCC 204508 / S288c) (Baker's yeast).